A 155-amino-acid chain; its full sequence is uncharacterized protein (155 aa).

The disordered stretch occupies residues 56 to 79; sequence GEKRPTHRRPYRRTKPYPKRPSML. Basic residues predominate over residues 60–73; sequence PTHRRPYRRTKPYP.

This is an uncharacterized protein from Sinorhizobium fredii (strain NBRC 101917 / NGR234).